The primary structure comprises 847 residues: DNA mismatch repair protein MutS (847 aa).

Residue 602–609 (GPNMSGKS) coordinates ATP.

This sequence belongs to the DNA mismatch repair MutS family.

Functionally, this protein is involved in the repair of mismatches in DNA. It is possible that it carries out the mismatch recognition step. This protein has a weak ATPase activity. The chain is DNA mismatch repair protein MutS from Streptococcus uberis (strain ATCC BAA-854 / 0140J).